We begin with the raw amino-acid sequence, 321 residues long: Mas-related G-protein coupled receptor member H (321 aa).

Residues 1 to 35 (MEPLAMTLYPLESTQPTRNKTPNETTWSSEHTDDH) lie on the Extracellular side of the membrane. The N-linked (GlcNAc...) asparagine glycan is linked to Asn23. Residues 36–56 (TYFLVSLVICSLGLAGNGLLI) form a helical membrane-spanning segment. Topologically, residues 57 to 71 (WFLIFCIKRKPFTIY) are cytoplasmic. The helical transmembrane segment at 72-92 (ILHLAIADFMVLLCSSIMKLV) threads the bilayer. At 93 to 102 (NTFHIYNMTL) the chain is on the extracellular side. N-linked (GlcNAc...) asparagine glycosylation is present at Asn99. A helical transmembrane segment spans residues 103 to 126 (ESYAILFMIFGYNTGLHLLTAISV). Topologically, residues 127–147 (ERCLSVLYPIWYQCQRPKHQS) are cytoplasmic. Residues 148–168 (AVACMLLWALSVLVSGLENFF) traverse the membrane as a helical segment. Residues 169–188 (CILEVKPQFPECRYVYIFSC) are Extracellular-facing. Residues 189 to 209 (ILTFLVFVPLMIFSNLILFIQ) form a helical membrane-spanning segment. Residues 210–225 (VCCNLKPRQPTKLYVI) lie on the Cytoplasmic side of the membrane. Residues 226–246 (IMTTVILFLVFAMPMKVLLII) form a helical membrane-spanning segment. Position 247 (Gly247) is a topological domain, extracellular. Residues 248-271 (YYSSSLDDSVWDSLPYLNMLSTIN) traverse the membrane as a helical segment. The Cytoplasmic portion of the chain corresponds to 272–320 (CSINPIVYFVVGSLRRKRSRKSLKEALQKVFEEKPVVASRENVTQFSLP).

This sequence belongs to the G-protein coupled receptor 1 family. Mas subfamily.

The protein localises to the cell membrane. Orphan receptor. May regulate nociceptor function and/or development, including the sensation or modulation of pain. This Mus musculus (Mouse) protein is Mas-related G-protein coupled receptor member H (Mrgprh).